We begin with the raw amino-acid sequence, 367 residues long: UDP-N-acetylglucosamine--N-acetylmuramyl-(pentapeptide) pyrophosphoryl-undecaprenol N-acetylglucosamine transferase (367 aa).

Residues 15–17 (TGG), asparagine 127, arginine 163, serine 191, isoleucine 249, and glutamine 294 contribute to the UDP-N-acetyl-alpha-D-glucosamine site.

This sequence belongs to the glycosyltransferase 28 family. MurG subfamily.

The protein resides in the cell inner membrane. The enzyme catalyses di-trans,octa-cis-undecaprenyl diphospho-N-acetyl-alpha-D-muramoyl-L-alanyl-D-glutamyl-meso-2,6-diaminopimeloyl-D-alanyl-D-alanine + UDP-N-acetyl-alpha-D-glucosamine = di-trans,octa-cis-undecaprenyl diphospho-[N-acetyl-alpha-D-glucosaminyl-(1-&gt;4)]-N-acetyl-alpha-D-muramoyl-L-alanyl-D-glutamyl-meso-2,6-diaminopimeloyl-D-alanyl-D-alanine + UDP + H(+). Its pathway is cell wall biogenesis; peptidoglycan biosynthesis. Cell wall formation. Catalyzes the transfer of a GlcNAc subunit on undecaprenyl-pyrophosphoryl-MurNAc-pentapeptide (lipid intermediate I) to form undecaprenyl-pyrophosphoryl-MurNAc-(pentapeptide)GlcNAc (lipid intermediate II). This chain is UDP-N-acetylglucosamine--N-acetylmuramyl-(pentapeptide) pyrophosphoryl-undecaprenol N-acetylglucosamine transferase, found in Burkholderia multivorans (strain ATCC 17616 / 249).